We begin with the raw amino-acid sequence, 1857 residues long: MLQSGGIKGPQRKQFQPASAEARSMRATIASLQDSKVDSARPDSPQYSPKSPSKRSCTLWVHDETFSREEVLCNLQALPDFGLNVGYLVEVSVAQGDHLGSQLKPEAGSRYLQDEGSFTSPRWPIGAGGSASRSTFGGDAKLRSRKTPGKFLFIVKPFPPEVRAKHPNLQVSVANHVANAFGFKNRSQIHLTVRKRAQCSASHVELIFRDQFLLRSDMWRLTMSELVDRPIYKGQKILFMGSIKATVKSVYISGNKTLSAYFSPNTIPIFRSESARFVLFIQMSKEMWDFDSEGTGDILFSRVINSLMPELFKRWANIDAHHLVTIVLFTRVQYDFATPTSGPATLNSSFLNRGPDGSAPKTQDFYRVVVNDMPSGQWTTILDSLKKEFRTFLRDVSIPPPYFPDTPIAAEDIPRFTESHPPKIAGRPTSALRGNILEAIHVASSYLAFEHIGRDLVRTGTSIVIITPGTGVFEVPFKILSLTSDVLTSRAIGIDLICLSPMPLHSVPLFKYKLPRDTSCRPGSSISSRLAPYEHRRMSATFSTAHMSPLDRPGTALSDQALQGIGSSPQEEEWGYGIPHWVDISYWDPKLDRASRAAAKKKTTMSPVIATIAKNSQLFVPKVRMYEIQMMGVMESEQSNISIPHMSSTSSRTQKRPGTLASLAASIGNSPSPDSSYRSQAGDGFRPKSFMYNIKDSKKSMLPPDAKERTNLVEWMDSYDQSIFHLHPKQKRPRRRSKAKQAAETETSRPSQHETPKLRSSMDLGQPDNRHLSPFGQPHLQLRYERIEEESLVTPRRITQPPTQTNMKSIMKPKPKLPIPRISRSISFALRGLGSAPPRAHASTEVKTEHAQALPTSGGRTPEDPASEASNTVTPRQNSPLNSGAATPKPERSEADAPSNVEAMTPSKPILIRAIRRTGEDGSVEPLPLEGSFSTQGTEPRHDLLQHHDSQGAFPVKRTGRRLDLLSSGDPTSPPTVSATDALSPWVSPINPWNPPKLAPSRSSWYGRWQHVYPRIPKTTSVKWKSLKSPASLPITAEELPTESELTSNFLQTPYRVYQNDEADAEVPKTREMLLRDMISLRLSHGFQIVVGKKVEEQSTGYSNIFDTNALSKDGTTVFMARGNVIHRLVCVEGEIEVTKFTRRPLNGFPTDELNDASISYSPAVKTILSAQYCKNTISLGAPPEEYNWNSADAFLAGHRDHITNSIRQLRFWRTRFVLIPVQVPLAARRHISSFHEDNEEEIHLLGIYKLTQMWQRHRYIPPEERQFQSAARKSKDQNPLNIIYQTSDPSVVVAAELDRLLLEDPGLDNAPAQLLPDSELLQRYNITLAFLAQKIQGEKGVRMMDRRWHWRLHYNCFVGMEFTTWLLQNFRDIDTREEAVEFGNDLMTHGLFHHVQRRHNFRDGNYFYQIADEYRVVRPESRGGWFQPRKVDKSNPNTPMGEAMKDSASSIRARAEKSIDETGSKLDIPGSSKPSRPKPSISLAKSLKYDVDPRKRSDRPEVIDLHYDRIHNPENCFHIELSWMNATPKLVEDAIMSWVGTAEKYGLKLVELPISEASSIVERQVFRRPYPIKLKVDPPPTPVSTYLTATSFTSQAVPDHHFYQKAILKKFDFVLDFEAKSAFPANVDVCYSWGKPDYQFPQYVHRTGAVLAQITDEGHFLLLANRFHNSHNPVSLKDSNKFDRSSEYFPRPRAATFDPLDRRSPLLSPVARPTPGTDSSIPSASPPYISASDASQNSYRVTDQIKDSMRAFCSDAEQLEAFFAEMAMAKGKTATTAGPASLSSVKLSPTTPATVDSSIPSLELPASVVARNLHLPQPVALAAAQASAETPQVAGSIDAVMRSTSVSSPRNGAFRH.

Disordered regions lie at residues 1-55 (MLQS…PSKR), 639-690 (SNIS…PKSF), 724-777 (FHLH…PFGQ), 799-818 (TQPPTQTNMKSIMKPKPKLP), and 833-943 (LGSA…PRHD). Polar residues-rich tracts occupy residues 45–55 (PQYSPKSPSKR), 639–652 (SNISIPHMSSTSSR), and 667–679 (IGNSPSPDSSYRS). Positions 726–739 (LHPKQKRPRRRSKA) are enriched in basic residues. Basic and acidic residues predominate over residues 741–757 (QAAETETSRPSQHETPK). Over residues 868 to 885 (EASNTVTPRQNSPLNSGA) the composition is skewed to polar residues. Residues 1338–1413 (GEKGVRMMDR…DGNYFYQIAD (76 aa)) form the DEP domain. Disordered stretches follow at residues 1426 to 1496 (WFQP…DPRK) and 1711 to 1730 (VARPTPGTDSSIPSASPPYI). Over residues 1454–1465 (ARAEKSIDETGS) the composition is skewed to basic and acidic residues. 2 stretches are compositionally biased toward low complexity: residues 1469 to 1483 (IPGSSKPSRPKPSIS) and 1719 to 1730 (DSSIPSASPPYI).

Belongs to the IML1 family.

The protein resides in the vacuole membrane. This chain is Vacuolar membrane-associated protein IML1 (IML1), found in Coccidioides immitis (strain RS) (Valley fever fungus).